A 129-amino-acid chain; its full sequence is Gem-associated protein 7 (129 aa).

An N-acetylmethionine modification is found at methionine 1. Residues 1 to 31 (MQSPLTIPVPVPVLRLPRGPDGFSRGFASDG) enclose the SUZ-C domain. In terms of domain architecture, Sm spans 63 to 129 (RYLRSLLAMV…SDIISYSFKL (67 aa)).

Belongs to the gemin-7 family. As to quaternary structure, part of the core SMN complex that contains SMN1, GEMIN2/SIP1, DDX20/GEMIN3, GEMIN4, GEMIN5, GEMIN6, GEMIN7, GEMIN8 and STRAP/UNRIP. Part of the SMN-Sm complex that contains SMN1, GEMIN2/SIP1, DDX20/GEMIN3, GEMIN4, GEMIN5, GEMIN6, GEMIN7, GEMIN8, STRAP/UNRIP and the Sm proteins SNRPB, SNRPD1, SNRPD2, SNRPD3, SNRPE, SNRPF and SNRPG. Interacts with GEMIN6; the interaction is direct. Interacts with STRAP/UNRIP; the interaction is direct. Interacts with GEMIN8; the interaction is direct. Interacts with SNRPB, SNRPD2, SNRPD3 and SNRPE; the interaction is direct.

The protein localises to the nucleus. It localises to the nucleoplasm. It is found in the gem. Its subcellular location is the cytoplasm. In terms of biological role, the SMN complex catalyzes the assembly of small nuclear ribonucleoproteins (snRNPs), the building blocks of the spliceosome, and thereby plays an important role in the splicing of cellular pre-mRNAs. Most spliceosomal snRNPs contain a common set of Sm proteins SNRPB, SNRPD1, SNRPD2, SNRPD3, SNRPE, SNRPF and SNRPG that assemble in a heptameric protein ring on the Sm site of the small nuclear RNA to form the core snRNP (Sm core). In the cytosol, the Sm proteins SNRPD1, SNRPD2, SNRPE, SNRPF and SNRPG are trapped in an inactive 6S pICln-Sm complex by the chaperone CLNS1A that controls the assembly of the core snRNP. To assemble core snRNPs, the SMN complex accepts the trapped 5Sm proteins from CLNS1A forming an intermediate. Binding of snRNA inside 5Sm triggers eviction of the SMN complex, thereby allowing binding of SNRPD3 and SNRPB to complete assembly of the core snRNP. In Mus musculus (Mouse), this protein is Gem-associated protein 7 (Gemin7).